The following is a 326-amino-acid chain: Glycerol-3-phosphate dehydrogenase [NAD(P)+] (326 aa).

NADPH-binding residues include Trp-13, Arg-33, and Lys-107. Sn-glycerol 3-phosphate-binding residues include Lys-107, Gly-135, and Ser-137. An NADPH-binding site is contributed by Ala-139. Sn-glycerol 3-phosphate-binding residues include Lys-190, Asp-243, Ser-253, Arg-254, and Asn-255. Lys-190 (proton acceptor) is an active-site residue. Arg-254 is an NADPH binding site. 2 residues coordinate NADPH: Leu-273 and Glu-275.

The protein belongs to the NAD-dependent glycerol-3-phosphate dehydrogenase family.

Its subcellular location is the cytoplasm. The catalysed reaction is sn-glycerol 3-phosphate + NAD(+) = dihydroxyacetone phosphate + NADH + H(+). It carries out the reaction sn-glycerol 3-phosphate + NADP(+) = dihydroxyacetone phosphate + NADPH + H(+). Its pathway is membrane lipid metabolism; glycerophospholipid metabolism. In terms of biological role, catalyzes the reduction of the glycolytic intermediate dihydroxyacetone phosphate (DHAP) to sn-glycerol 3-phosphate (G3P), the key precursor for phospholipid synthesis. The protein is Glycerol-3-phosphate dehydrogenase [NAD(P)+] of Brucella abortus (strain 2308).